Reading from the N-terminus, the 779-residue chain is Translation initiation factor IF-2 (779 aa).

The interval 44-193 (RQLDNAVDGT…TPPKPKELPE (150 aa)) is disordered. Residues 53–65 (TNKKAEAPKKETT) are compositionally biased toward basic and acidic residues. Positions 66-81 (SNENGNSKGPNKPNMT) are enriched in polar residues. Composition is skewed to low complexity over residues 82–93 (NSNEKSNKPNKP) and 117–167 (ANTS…NNKG). Residues 280–449 (ERPPVVTIMG…LLVSEVEELK (170 aa)) enclose the tr-type G domain. The segment at 289–296 (GHVDHGKT) is G1. A GTP-binding site is contributed by 289-296 (GHVDHGKT). The segment at 314–318 (GITQH) is G2. The G3 stretch occupies residues 335 to 338 (DTPG). GTP contacts are provided by residues 335–339 (DTPGH) and 389–392 (NKID). The segment at 389 to 392 (NKID) is G4. The tract at residues 425 to 427 (SAK) is G5.

This sequence belongs to the TRAFAC class translation factor GTPase superfamily. Classic translation factor GTPase family. IF-2 subfamily.

The protein resides in the cytoplasm. In terms of biological role, one of the essential components for the initiation of protein synthesis. Protects formylmethionyl-tRNA from spontaneous hydrolysis and promotes its binding to the 30S ribosomal subunits. Also involved in the hydrolysis of GTP during the formation of the 70S ribosomal complex. The sequence is that of Translation initiation factor IF-2 from Listeria monocytogenes serovar 1/2a (strain ATCC BAA-679 / EGD-e).